We begin with the raw amino-acid sequence, 300 residues long: MILEGSGVMNLNPSNNLLHQQPTWTDSYSTCNVSSGFFGGQWHEIHPQYWTKYQVWEWLQHLLDTNQLDASCIPFQEFDVNGEHLCSMSLQEFTRAAGTAGQLLYSNLQHLKWNGQCSSDLFQSTHNVIVKTEQTDPSIMNTWKEENYLYDTNYGSTVDLLDSKTFCRAQISMTTTGHLPIAESPDTKKEQDHPTKPHTKKHNPRGTHLWEFIRDILLNPDKNPGLIKWEDRSEGIFRFLKSEAVAQLWGKKKNNSSMTYEKLSRAMRYYYKREILERVDGRRLVYKFGKNARGWRENEN.

The 87-residue stretch at 29–115 (STCNVSSGFF…SNLQHLKWNG (87 aa)) folds into the PNT domain. The disordered stretch occupies residues 179–204 (LPIAESPDTKKEQDHPTKPHTKKHNP). The span at 185–195 (PDTKKEQDHPT) shows a compositional bias: basic and acidic residues. Positions 207–289 (THLWEFIRDI…DGRRLVYKFG (83 aa)) form a DNA-binding region, ETS.

Belongs to the ETS family.

The protein resides in the nucleus. Its function is as follows. Transcriptional activator that may play a role in regulating epithelial cell differentiation and proliferation. May act as a repressor for a specific subset of ETS/AP-1-responsive genes, and as a modulator of the nuclear response to mitogen-activated protein kinase signaling cascades. Binds to DNA sequences containing the consensus nucleotide core sequence GGAA. Involved in regulation of TNFRSF10B/DR5 expression through Ets-binding sequences on the TNFRSF10B/DR5 promoter. This is ETS homologous factor (EHF) from Bos taurus (Bovine).